Here is a 112-residue protein sequence, read N- to C-terminus: Conotoxin vil14.4 (112 aa).

The first 22 residues, Met-1–Phe-22, serve as a signal peptide directing secretion. Positions Glu-23–Arg-85 are excised as a propeptide. 2 disulfides stabilise this stretch: Cys-91–Cys-111 and Cys-95–Cys-107.

The protein belongs to the conotoxin R superfamily. Expressed by the venom duct.

It is found in the secreted. The chain is Conotoxin vil14.4 from Conus villepinii (Villepin's cone).